Here is a 304-residue protein sequence, read N- to C-terminus: Murein tetrapeptide carboxypeptidase (304 aa).

Ser106 serves as the catalytic Nucleophile. Active-site charge relay system residues include Glu200 and His270.

The protein belongs to the peptidase S66 family.

Its subcellular location is the cytoplasm. The catalysed reaction is N-acetyl-D-glucosaminyl-N-acetylmuramoyl-L-alanyl-meso-2,6-diaminoheptanedioyl-D-alanine + H2O = N-acetyl-D-glucosaminyl-N-acetylmuramoyl-L-alanyl-meso-2,6-diaminoheptanedioate + D-alanine. It functions in the pathway cell wall biogenesis; peptidoglycan recycling. In terms of biological role, releases the terminal D-alanine residue from the cytoplasmic tetrapeptide recycling product L-Ala-gamma-D-Glu-meso-Dap-D-Ala. Can also cleave D-Ala from murein derivatives containing the tetrapeptide, i.e. MurNAc-tetrapeptide, UDP-MurNAc-tetrapeptide, GlcNAc-MurNAc-tetrapeptide, and GlcNAc-anhMurNAc-tetrapeptide. Does not act on murein sacculi or cross-linked muropeptides. The tripeptides produced by the LcdA reaction can then be reused as peptidoglycan building blocks; LcdA is thereby involved in murein recycling. In Escherichia coli O6:H1 (strain CFT073 / ATCC 700928 / UPEC), this protein is Murein tetrapeptide carboxypeptidase (ldcA).